Consider the following 404-residue polypeptide: GID complex subunit 9 (404 aa).

Residues 116–148 (SRVRLNRLVADYMMANGYHGAAALLCKDSQLEN) form the LisH domain. Residues 154-211 (IYKRYQLIHDSILQQELKEVLSWCSEHRAILKKNNSTLELEVRLQRFIELIKSKKLCQ) form the CTLH domain. The RING-Gid-type zinc-finger motif lies at 317–389 (CPVCTPCLND…REGFLRDPYS (73 aa)).

Belongs to the FYV10 family. In terms of assembly, identified in the GID/CTLH complex. In the absence of stress, the complex exists as an inactive anticipatory complex (GID(Ant)), composed of Gid1, the E3 ubiquitin-ligase Gid2, Gid5, Gid8, and the RING-like subunit Gid9, awaiting a substrate receptor to form the active E3 ligase complex. When cells are shifted to glucose-containing medium, the substrate receptor Gid4 is induced and becomes part of the complex, named GID(SR4). Additionally, Gid7 transforms the GID(SR4) E3 ligase core into a higher-order supramolecular assembly (Chelator-GID(SR4)). Under osmotic or heat stress, the substrate receptor Gid10 is induced and becomes part of the complex, named GID(SR10).

It is found in the cytoplasm. It localises to the nucleus. It carries out the reaction S-ubiquitinyl-[E2 ubiquitin-conjugating enzyme]-L-cysteine + [acceptor protein]-L-lysine = [E2 ubiquitin-conjugating enzyme]-L-cysteine + N(6)-ubiquitinyl-[acceptor protein]-L-lysine.. It participates in protein modification; protein ubiquitination. Its function is as follows. Component of the GID E3 ligase complex recruiting N termini and catalyzing ubiquitination of proteins targeted for degradation. GID E3 is regulated through assembly with interchangeable N-degron-binding substrate receptors induced by distinct environmental perturbations. Required for the adaptation to the presence of glucose in the growth medium; mediates in association with the substrate receptor VID24/GID4 the degradation of enzymes involved in gluconeogenesis when cells are shifted to glucose-containing medium. The chain is GID complex subunit 9 (gid9) from Schizosaccharomyces pombe (strain 972 / ATCC 24843) (Fission yeast).